Here is a 1752-residue protein sequence, read N- to C-terminus: GESGSGKTTIRSHLLSAFLSFSSTPLSSKLSYAAFLFDTLTTTKSLTTQTASKAGLFLELQYDGSSSVNPTLIGGKIIDHRLERSRITSVPTGERSFHVLYYLLAGTSPAEKAHLGFDKAVHVSTSSGAIGHKRWRYLGHPTQLKVGVNDVEGFQHFKTALRKLEFPRSEIAEICQILATILHIGQLEFASGQATTTHAEESGGYSHEGGETVTIVKNKDVLSIIAAFLGLSVEDLENSFGYRTKTIHRERVTVMLDPKGARQNADELARTIYSLLVAYVIEAVNQRICAAEDSVANTISIVDFPGFAQACATGSTLDQLFNNAATELLYNFCLQSFFDRKADELEREEVSVPATSYFDNTDAVRGLLKHGNGLLSILDDQTRRGRTDNQLLESLRRRFENKNPTIIVEGSKRTSLISQNARSAFTVKHFAGEIDYSVNGLIEENGEFISGDLMRLMKSTKSDFVRELFGQAALQTVTHPKEKTAIMQAQVSSKPLRMPSMARRKTSPSSRLAFDAGDADEVESQAESIAKDSSSGRRKSAMLTSGIQGAAGQFLSSLDIVNKCLSSTNLNPYFIFCLKPNDRRIANQFDSKCVRAQVQMFGIAEISQRLRNADFSVFLPFAEFLGLAEIGNIVVVGSDKEKAEVVLDEKRWPGNEARVGSTGVFLSERCWADLAKVGERVVPVYAADMSDEGGDGLLHPRSTGYGDSKVRLLNPADQSPGAFIYGDEAKQGYFGSRDLDGRSDAGNSAFNSGDMFRNHETREQMLEKGNEKKMEEVDDAPISGSRKRWIALVYLLTFYIPDFAIKLFGRIKRKDVRMAWREKFAINLIIWFSCGVAIFFIVAFPGLVCPTQHVYSAAELSSHNGKDGHSSFIAIRGVVFDLDKFMPGHYPHIVPESALKKYAGVDATGLFPVQVSALCQGKSGSVDPTVLLDYRPTNISGSATTISGTDTNSVYHDFRHFTNDSRPDWFYEQMVMLKANYLKGYVGYTPKYLNTLGKKSQSIGSINGKVYDLTSYIAGGRLTKAPPGETVPSDVDTDFMDNSVVSLFQSLPGQDLSKHWENLKIDALRRRMQLCLDNLFFVGHVDTRNSAQCEFARYFILAISVLICSIIVFKFLAALQFGRKNVPENLDKFIICQVPAYTEDEESLRRAIDSMARMRYDDKRKLLVVICDGMIIGQGNDRPTPRIVLDILGVPESVDPEPLSFESLGEGQKQHNMGKVYSGLYEVQGHIVPFLVIVKVGKPSEVSRPGNRGKRDSQMVLMKIPERVHYNLPMSPMELEMHHQIRNVIGVNPTFYEFILQVDADTVVAPDSATRMVAAFLNDTRLIGVCGETALTNAKTSAVTMIQVYEYYISHNLTKAFESLFGSVTCLPGCFTMYRIRSAETAKPLFVSKEVVDAYAEIRVDTLHMKNLLHLGEDRYLTTLLLKHHSKYKTKYISSAKAWTIAPESWTVFLSQRRRWINSTVHNLIELIPMQQLCGFCCFSMRFVVFVDLLSTVIQPVTLAYIIYLIYWLVKDTSTIPYTSLILLAAIYGLQALIFIIRRKWEMVGWMIVYLLALPVFSLPCPSTLSGTWTTLPGVTHVSSQERKAGKVVISDEGKFDPASIPKKKWEEYQTELWEAQTSRDDRSEVSGISYGTKSYHPAQSEYGFPGSRPMSQLDLPRFGSRMSLAPSEMMSRHADMEMENLSHLPSDDAILAEIREILRTADLMSVTKKSIKLELERAFGVNLDLKRPYINSGKGYTFPFPVLRTVC.

1–8 (GESGSGKT) contacts ATP. Residues 492–520 (SSKPLRMPSMARRKTSPSSRLAFDAGDAD) form a disordered region. The tract at residues 558 to 582 (LDIVNKCLSSTNLNPYFIFCLKPND) is actin-binding. Transmembrane regions (helical) follow at residues 789-809 (WIAL…KLFG) and 828-848 (LIIW…PGLV). The 89-residue stretch at 852-940 (QHVYSAAELS…LLDYRPTNIS (89 aa)) folds into the Cytochrome b5 heme-binding domain. N-linked (GlcNAc...) asparagine glycans are attached at residues Asn-938 and Asn-963. A helical membrane pass occupies residues 1099–1119 (FILAISVLICSIIVFKFLAAL). Asn-1322, Asn-1356, and Asn-1462 each carry an N-linked (GlcNAc...) asparagine glycan. A run of 3 helical transmembrane segments spans residues 1494-1514 (LSTV…YWLV), 1520-1540 (IPYT…LIFI), and 1547-1567 (MVGW…PCPS). A glycan (N-linked (GlcNAc...) asparagine) is linked at Asn-1685. A DEK-C domain is found at 1689–1744 (LPSDDAILAEIREILRTADLMSVTKKSIKLELERAFGVNLDLKRPYINSGKGYTFP).

In the N-terminal section; belongs to the TRAFAC class myosin-kinesin ATPase superfamily. Myosin family. This sequence in the C-terminal section; belongs to the chitin synthase family. Class V subfamily.

The protein localises to the cell membrane. It is found in the cell septum. The protein resides in the cell tip. It catalyses the reaction [(1-&gt;4)-N-acetyl-beta-D-glucosaminyl](n) + UDP-N-acetyl-alpha-D-glucosamine = [(1-&gt;4)-N-acetyl-beta-D-glucosaminyl](n+1) + UDP + H(+). Polymerizes chitin, a structural polymer of the cell wall and septum, by transferring the sugar moiety of UDP-GlcNAc to the non-reducing end of the growing chitin polymer. Important for hyphal growth and conidiophore development but not pathogenicity. The protein is Chitin synthase E of Aspergillus fumigatus (Neosartorya fumigata).